The following is a 259-amino-acid chain: Protoheme IX farnesyltransferase (259 aa).

8 consecutive transmembrane segments (helical) span residues 15–35 (LICL…NGVL), 61–81 (ATVA…TFLP), 83–103 (LTTA…TLWF), 109–129 (WGVV…ASAV), 137–157 (PLIL…ALAL), 182–202 (VCIF…WFTG), 208–228 (FAIE…LYLV), and 236–256 (AFQA…IDIC).

This sequence belongs to the UbiA prenyltransferase family. Protoheme IX farnesyltransferase subfamily.

The protein resides in the cell inner membrane. The catalysed reaction is heme b + (2E,6E)-farnesyl diphosphate + H2O = Fe(II)-heme o + diphosphate. Its pathway is porphyrin-containing compound metabolism; heme O biosynthesis; heme O from protoheme: step 1/1. In terms of biological role, converts heme B (protoheme IX) to heme O by substitution of the vinyl group on carbon 2 of heme B porphyrin ring with a hydroxyethyl farnesyl side group. This Geotalea uraniireducens (strain Rf4) (Geobacter uraniireducens) protein is Protoheme IX farnesyltransferase.